An 829-amino-acid polypeptide reads, in one-letter code: Protein roadkill (829 aa).

Low complexity-rich tracts occupy residues Glu24–Gln36, Thr122–Pro140, and Ser266–Ser288. 4 disordered regions span residues Glu24–Asn47, Ser106–Val142, Ser266–Ser296, and His313–Gln400. The segment covering His313–Pro322 has biased composition (basic residues). Low complexity-rich tracts occupy residues Leu323 to His353, Ser372 to Ser382, and Ser389 to Gln400. One can recognise an MATH domain in the interval Lys486–Val616. The region spanning Ser655–Glu722 is the BTB domain.

The protein belongs to the Tdpoz family. As to quaternary structure, interacts with ci and gft/CUL3. Expressed near the anterio-posterior compartment boundary of antenna, leg and wing disks.

It localises to the nucleus. It functions in the pathway protein modification; protein ubiquitination. In terms of biological role, involved in segment polarity. In complex with gft/CUL3, promotes ubiquitination of ci and its subsequent degradation by the proteasome, which results in hh signaling attenuation. This regulation may be important during eye formation for proper packing of ommatidia into a hexagonal array. This Drosophila melanogaster (Fruit fly) protein is Protein roadkill (rdx).